We begin with the raw amino-acid sequence, 303 residues long: Probable cell division protein WhiA (303 aa).

The segment at residues 272–303 (SIQQVADALEFPITKSGVNHRLRKINKIADDL) is a DNA-binding region (H-T-H motif).

The protein belongs to the WhiA family.

Its function is as follows. Involved in cell division and chromosome segregation. This is Probable cell division protein WhiA from Streptococcus pyogenes serotype M12 (strain MGAS2096).